We begin with the raw amino-acid sequence, 318 residues long: Phosphate acetyltransferase (318 aa).

Belongs to the phosphate acetyltransferase and butyryltransferase family.

It is found in the cytoplasm. It catalyses the reaction acetyl-CoA + phosphate = acetyl phosphate + CoA. The protein operates within metabolic intermediate biosynthesis; acetyl-CoA biosynthesis; acetyl-CoA from acetate: step 2/2. This chain is Phosphate acetyltransferase (pta), found in Paracoccus denitrificans.